Reading from the N-terminus, the 196-residue chain is MEIMKKPKIKSIPYEDFIDNESLEKMVKELNEGGANVFVGVLDDLINWGRSNSLWPLTFATSCCGIEFMALGAARYDMARFGFEVARASPRQADMIMVCGTITNKMAPVLKRLYDQMADPKYVIAVGGCAVSGGPFRKSYHVVNGVDKILPVDVYIPGCPPRPEAFYYGMMQLQRKVKIEKFFGGVNRKEKKPEGK.

[4Fe-4S] cluster-binding residues include cysteine 63, cysteine 64, cysteine 129, and cysteine 159.

The protein belongs to the complex I 20 kDa subunit family. As to quaternary structure, NDH-1 is composed of 14 different subunits. Subunits NuoB, C, D, E, F, and G constitute the peripheral sector of the complex. It depends on [4Fe-4S] cluster as a cofactor.

Its subcellular location is the cell inner membrane. It catalyses the reaction a quinone + NADH + 5 H(+)(in) = a quinol + NAD(+) + 4 H(+)(out). Functionally, NDH-1 shuttles electrons from NADH, via FMN and iron-sulfur (Fe-S) centers, to quinones in the respiratory chain. The immediate electron acceptor for the enzyme in this species is believed to be a menaquinone. Couples the redox reaction to proton translocation (for every two electrons transferred, four hydrogen ions are translocated across the cytoplasmic membrane), and thus conserves the redox energy in a proton gradient. The polypeptide is NADH-quinone oxidoreductase subunit B (Bacteroides fragilis (strain ATCC 25285 / DSM 2151 / CCUG 4856 / JCM 11019 / LMG 10263 / NCTC 9343 / Onslow / VPI 2553 / EN-2)).